We begin with the raw amino-acid sequence, 167 residues long: MPRSQRNDNFIDKTFTVVADILLKILPTTGREKEAFAYYRDGMSAQAEGEYAEALQNYYEAMRLEVDAYDRSYILYNIGLIHTSNGEHAKALEYYYQAIERNPSLPQALNNIAVIYHYRGEQAIEEGNSEAAEILFDQAASYWKQAIRLAPTSYIEAQNWLKLTGRI.

TPR repeat units follow at residues 35–68 (AFAY…EVDA), 72–105 (SYIL…NPSL), and 120–153 (GEQA…APTS).

The protein belongs to the Ycf3 family.

The protein resides in the plastid. It localises to the chloroplast thylakoid membrane. In terms of biological role, essential for the assembly of the photosystem I (PSI) complex. May act as a chaperone-like factor to guide the assembly of the PSI subunits. The sequence is that of Photosystem I assembly protein Ycf3 from Chlorokybus atmophyticus (Soil alga).